A 309-amino-acid chain; its full sequence is uncharacterized protein (309 aa).

The region spanning 17 to 254 is the Radical SAM core domain; it reads RYGQKVHKLT…AGEMIRHTPP (238 aa). Cysteine 33, cysteine 45, and cysteine 48 together coordinate [4Fe-4S] cluster.

It belongs to the radical SAM superfamily. The cofactor is [4Fe-4S] cluster.

This is an uncharacterized protein from Escherichia coli O157:H7.